The chain runs to 444 residues: Signal recognition particle 54 kDa protein (444 aa).

GTP-binding positions include 104–111, 184–188, and 242–245; these read GLQGSGKT, DTAGR, and TKLD.

Belongs to the GTP-binding SRP family. SRP54 subfamily. Part of the signal recognition particle protein translocation system, which is composed of SRP and FtsY. Archaeal SRP consists of a 7S RNA molecule of 300 nucleotides and two protein subunits: SRP54 and SRP19.

It is found in the cytoplasm. It catalyses the reaction GTP + H2O = GDP + phosphate + H(+). In terms of biological role, involved in targeting and insertion of nascent membrane proteins into the cytoplasmic membrane. Binds to the hydrophobic signal sequence of the ribosome-nascent chain (RNC) as it emerges from the ribosomes. The SRP-RNC complex is then targeted to the cytoplasmic membrane where it interacts with the SRP receptor FtsY. In Methanothrix thermoacetophila (strain DSM 6194 / JCM 14653 / NBRC 101360 / PT) (Methanosaeta thermophila), this protein is Signal recognition particle 54 kDa protein.